Reading from the N-terminus, the 102-residue chain is Large ribosomal subunit protein bL21 (102 aa).

This sequence belongs to the bacterial ribosomal protein bL21 family. As to quaternary structure, part of the 50S ribosomal subunit. Contacts protein L20.

This protein binds to 23S rRNA in the presence of protein L20. This chain is Large ribosomal subunit protein bL21, found in Nocardioides sp. (strain ATCC BAA-499 / JS614).